A 211-amino-acid chain; its full sequence is Large ribosomal subunit protein uL3 (211 aa).

N5-methylglutamine is present on Gln-150.

This sequence belongs to the universal ribosomal protein uL3 family. In terms of assembly, part of the 50S ribosomal subunit. Forms a cluster with proteins L14 and L19. Post-translationally, methylated by PrmB.

In terms of biological role, one of the primary rRNA binding proteins, it binds directly near the 3'-end of the 23S rRNA, where it nucleates assembly of the 50S subunit. This is Large ribosomal subunit protein uL3 from Pseudomonas savastanoi pv. phaseolicola (strain 1448A / Race 6) (Pseudomonas syringae pv. phaseolicola (strain 1448A / Race 6)).